The primary structure comprises 376 residues: Queuine tRNA-ribosyltransferase (376 aa).

Asp-90 acts as the Proton acceptor in catalysis. Residues Asp-90–Phe-94, Asp-144, Gln-193, and Gly-220 contribute to the substrate site. Positions Gly-251–Asp-257 are RNA binding. Residue Asp-270 is the Nucleophile of the active site. An RNA binding; important for wobble base 34 recognition region spans residues Thr-275–Arg-279. Zn(2+)-binding residues include Cys-308, Cys-310, Cys-313, and His-339.

It belongs to the queuine tRNA-ribosyltransferase family. As to quaternary structure, homodimer. Within each dimer, one monomer is responsible for RNA recognition and catalysis, while the other monomer binds to the replacement base PreQ1. Requires Zn(2+) as cofactor.

The catalysed reaction is 7-aminomethyl-7-carbaguanine + guanosine(34) in tRNA = 7-aminomethyl-7-carbaguanosine(34) in tRNA + guanine. Its pathway is tRNA modification; tRNA-queuosine biosynthesis. Functionally, catalyzes the base-exchange of a guanine (G) residue with the queuine precursor 7-aminomethyl-7-deazaguanine (PreQ1) at position 34 (anticodon wobble position) in tRNAs with GU(N) anticodons (tRNA-Asp, -Asn, -His and -Tyr). Catalysis occurs through a double-displacement mechanism. The nucleophile active site attacks the C1' of nucleotide 34 to detach the guanine base from the RNA, forming a covalent enzyme-RNA intermediate. The proton acceptor active site deprotonates the incoming PreQ1, allowing a nucleophilic attack on the C1' of the ribose to form the product. After dissociation, two additional enzymatic reactions on the tRNA convert PreQ1 to queuine (Q), resulting in the hypermodified nucleoside queuosine (7-(((4,5-cis-dihydroxy-2-cyclopenten-1-yl)amino)methyl)-7-deazaguanosine). This is Queuine tRNA-ribosyltransferase from Cupriavidus pinatubonensis (strain JMP 134 / LMG 1197) (Cupriavidus necator (strain JMP 134)).